The sequence spans 252 residues: Cell division protein ZapD (252 aa).

It belongs to the ZapD family. As to quaternary structure, interacts with FtsZ.

The protein localises to the cytoplasm. Cell division factor that enhances FtsZ-ring assembly. Directly interacts with FtsZ and promotes bundling of FtsZ protofilaments, with a reduction in FtsZ GTPase activity. In Cupriavidus metallidurans (strain ATCC 43123 / DSM 2839 / NBRC 102507 / CH34) (Ralstonia metallidurans), this protein is Cell division protein ZapD.